The primary structure comprises 2283 residues: DNA polymerase epsilon catalytic subunit A (2283 aa).

The interval methionine 1–leucine 32 is disordered. A compositionally biased stretch (basic and acidic residues) spans arginine 9–glycine 24. Phosphoserine is present on residues serine 1184, serine 1296, and serine 1316. Disordered stretches follow at residues glycine 1935–glutamate 1968 and histidine 2014–leucine 2041. Basic and acidic residues predominate over residues glutamine 1936 to glutamate 1946. Residues glutamate 1947–glutamate 1968 show a composition bias toward acidic residues. Residues serine 2028–alanine 2037 are compositionally biased toward polar residues. Residues cysteine 2155, cysteine 2158, cysteine 2184, and cysteine 2187 each coordinate Zn(2+). The CysA-type zinc finger occupies cysteine 2155–cysteine 2187. [4Fe-4S] cluster contacts are provided by cysteine 2218, cysteine 2221, cysteine 2233, and cysteine 2235. The short motif at cysteine 2218–cysteine 2235 is the CysB motif element.

This sequence belongs to the DNA polymerase type-B family. Component of the DNA polymerase epsilon complex consisting of four subunits: the catalytic subunit POLE and the accessory subunits POLE2, POLE3 and POLE4. Interacts with RAD17 and TOPBP1. [4Fe-4S] cluster serves as cofactor.

It is found in the nucleus. It carries out the reaction DNA(n) + a 2'-deoxyribonucleoside 5'-triphosphate = DNA(n+1) + diphosphate. Functionally, catalytic component of the DNA polymerase epsilon complex. Participates in chromosomal DNA replication. Required during synthesis of the leading DNA strands at the replication fork and binds at/or near replication origins and moves along DNA with the replication fork. Has 3'-5' proofreading exonuclease activity that corrects errors arising during DNA replication. It is also involved in DNA synthesis during DNA repair. This is DNA polymerase epsilon catalytic subunit A (Pole) from Mus musculus (Mouse).